The sequence spans 158 residues: Lipoprotein signal peptidase (158 aa).

The next 3 membrane-spanning stretches (helical) occupy residues 12-32 (LFWW…AWIV), 46-66 (IIPG…FSLF), and 71-91 (IWLR…AILG). Active-site residues include Asp-124 and Asp-140. The chain crosses the membrane as a helical span at residues 135-155 (VFNVADIAINIGIVCLLWSAW).

This sequence belongs to the peptidase A8 family.

Its subcellular location is the cell inner membrane. The enzyme catalyses Release of signal peptides from bacterial membrane prolipoproteins. Hydrolyzes -Xaa-Yaa-Zaa-|-(S,diacylglyceryl)Cys-, in which Xaa is hydrophobic (preferably Leu), and Yaa (Ala or Ser) and Zaa (Gly or Ala) have small, neutral side chains.. Its pathway is protein modification; lipoprotein biosynthesis (signal peptide cleavage). In terms of biological role, this protein specifically catalyzes the removal of signal peptides from prolipoproteins. The protein is Lipoprotein signal peptidase of Thermosynechococcus vestitus (strain NIES-2133 / IAM M-273 / BP-1).